The following is a 130-amino-acid chain: Holo-[acyl-carrier-protein] synthase (130 aa).

Mg(2+) contacts are provided by D9 and E58.

The protein belongs to the P-Pant transferase superfamily. AcpS family. Requires Mg(2+) as cofactor.

The protein localises to the cytoplasm. It catalyses the reaction apo-[ACP] + CoA = holo-[ACP] + adenosine 3',5'-bisphosphate + H(+). In terms of biological role, transfers the 4'-phosphopantetheine moiety from coenzyme A to a Ser of acyl-carrier-protein. The protein is Holo-[acyl-carrier-protein] synthase of Mycobacterium bovis (strain ATCC BAA-935 / AF2122/97).